We begin with the raw amino-acid sequence, 515 residues long: Brahma-associated protein of 60 kDa (515 aa).

The disordered stretch occupies residues 1-124; that stretch reads MSQRFAPGQA…GGSKSDFATA (124 aa). A compositionally biased stretch (pro residues) spans 17–34; that stretch reads QPPPPAPGMRPYPPPGAS. The span at 49–62 shows a compositional bias: low complexity; that stretch reads PVPGTANVAGVPGV. Residues 90–103 are compositionally biased toward gly residues; sequence TGAGGGGVGSGGGS. Positions 116 to 204 are DNA-binding; that stretch reads GSKSDFATAK…SKEPTNDGEE (89 aa). The SWIB/MDM2 domain maps to 291-368; sequence YQPLQFKLDP…PQRLNPLLHP (78 aa).

There are 2 distinct Brahma complexes in the fruit fly, the Brahma-associated proteins (BAP) and Polybromo-containing BAP (PBAP) complexes, which are composed of common subunits Brm, Mor, Snr1/Bap45, Bap111/Dalo, Bap55, Bap60 and Act42A/Bap47, and additional signature subunits osa in the BAP complex and Polybromo and Bap170 in the PBAP complex. Interacts with sisA and sc. Interacts with mor. Interacts with p53. Interacts with erm (via N-terminal). Interacts with akirin; interaction is immune stimulation-dependent; activates selected Rel target gene promoters.

Involved in the recruitment and site-specific anchoring of the Brahma complex at specific promoter sites. The Brahma complex is a multiprotein complex which is the equivalent of the yeast SWI/SNF complex and acts by remodeling the chromatin by catalyzing an ATP-dependent alteration in the structure of nucleosomal DNA. This complex can both serve as a transcriptional coactivator or corepressor, depending on the context. Participates in X-chromosomal dosage compensation. Participates in neurogenesis. The polypeptide is Brahma-associated protein of 60 kDa (Bap60) (Drosophila melanogaster (Fruit fly)).